The primary structure comprises 764 residues: 5-methyltetrahydropteroyltriglutamate--homocysteine methyltransferase (764 aa).

5-methyltetrahydropteroyltri-L-glutamate-binding positions include 17–20 (RELK) and lysine 117. L-homocysteine is bound by residues 437-439 (IGS) and glutamate 490. L-methionine contacts are provided by residues 437–439 (IGS) and glutamate 490. Residues 521 to 522 (RC) and tryptophan 567 contribute to the 5-methyltetrahydropteroyltri-L-glutamate site. Aspartate 605 lines the L-homocysteine pocket. Aspartate 605 is an L-methionine binding site. Glutamate 611 contacts 5-methyltetrahydropteroyltri-L-glutamate. Residues histidine 647, cysteine 649, and glutamate 671 each coordinate Zn(2+). Histidine 701 acts as the Proton donor in catalysis. Zn(2+) is bound at residue cysteine 733.

Belongs to the vitamin-B12 independent methionine synthase family. The cofactor is Zn(2+).

It catalyses the reaction 5-methyltetrahydropteroyltri-L-glutamate + L-homocysteine = tetrahydropteroyltri-L-glutamate + L-methionine. Its pathway is amino-acid biosynthesis; L-methionine biosynthesis via de novo pathway; L-methionine from L-homocysteine (MetE route): step 1/1. Its function is as follows. Catalyzes the transfer of a methyl group from 5-methyltetrahydrofolate to homocysteine resulting in methionine formation. The sequence is that of 5-methyltetrahydropteroyltriglutamate--homocysteine methyltransferase from Blochmanniella pennsylvanica (strain BPEN).